The chain runs to 193 residues: Xanthine phosphoribosyltransferase (193 aa).

Positions 20 and 27 each coordinate xanthine. 129–133 (ANGKA) serves as a coordination point for 5-phospho-alpha-D-ribose 1-diphosphate. Lys-157 is a binding site for xanthine.

It belongs to the purine/pyrimidine phosphoribosyltransferase family. Xpt subfamily. Homodimer.

Its subcellular location is the cytoplasm. The enzyme catalyses XMP + diphosphate = xanthine + 5-phospho-alpha-D-ribose 1-diphosphate. It functions in the pathway purine metabolism; XMP biosynthesis via salvage pathway; XMP from xanthine: step 1/1. Converts the preformed base xanthine, a product of nucleic acid breakdown, to xanthosine 5'-monophosphate (XMP), so it can be reused for RNA or DNA synthesis. This chain is Xanthine phosphoribosyltransferase, found in Bifidobacterium adolescentis (strain ATCC 15703 / DSM 20083 / NCTC 11814 / E194a).